Consider the following 179-residue polypeptide: Large ribosomal subunit protein uL6 (179 aa).

This sequence belongs to the universal ribosomal protein uL6 family. In terms of assembly, part of the 50S ribosomal subunit.

Its function is as follows. This protein binds to the 23S rRNA, and is important in its secondary structure. It is located near the subunit interface in the base of the L7/L12 stalk, and near the tRNA binding site of the peptidyltransferase center. The polypeptide is Large ribosomal subunit protein uL6 (Chlorobium phaeobacteroides (strain DSM 266 / SMG 266 / 2430)).